Here is a 277-residue protein sequence, read N- to C-terminus: Urease accessory protein UreD (277 aa).

Belongs to the UreD family. As to quaternary structure, ureD, UreF and UreG form a complex that acts as a GTP-hydrolysis-dependent molecular chaperone, activating the urease apoprotein by helping to assemble the nickel containing metallocenter of UreC. The UreE protein probably delivers the nickel.

Its subcellular location is the cytoplasm. Its function is as follows. Required for maturation of urease via the functional incorporation of the urease nickel metallocenter. This chain is Urease accessory protein UreD, found in Pseudomonas entomophila (strain L48).